We begin with the raw amino-acid sequence, 427 residues long: Glutamate-1-semialdehyde 2,1-aminomutase (427 aa).

Position 265 is an N6-(pyridoxal phosphate)lysine (lysine 265).

This sequence belongs to the class-III pyridoxal-phosphate-dependent aminotransferase family. HemL subfamily. Homodimer. Pyridoxal 5'-phosphate is required as a cofactor.

The protein localises to the cytoplasm. The enzyme catalyses (S)-4-amino-5-oxopentanoate = 5-aminolevulinate. It participates in porphyrin-containing compound metabolism; protoporphyrin-IX biosynthesis; 5-aminolevulinate from L-glutamyl-tRNA(Glu): step 2/2. The polypeptide is Glutamate-1-semialdehyde 2,1-aminomutase (Actinobacillus succinogenes (strain ATCC 55618 / DSM 22257 / CCUG 43843 / 130Z)).